The primary structure comprises 93 residues: Alpha-defensin 22 (93 aa).

The N-terminal stretch at 1 to 19 (MKKLVLLSALVLLAYQVQT) is a signal peptide. Positions 20–58 (DPIQNTDEETNTEEQPGEEDQAVSVSFGGQEGSALHEKL) are excised as a propeptide. Positions 22–41 (IQNTDEETNTEEQPGEEDQA) are disordered. Acidic residues predominate over residues 25-40 (TDEETNTEEQPGEEDQ). Intrachain disulfides connect cysteine 64-cysteine 89, cysteine 66-cysteine 81, and cysteine 71-cysteine 88.

The protein belongs to the alpha-defensin family.

Its subcellular location is the secreted. Functionally, may have microbicidal activities. This Mus musculus (Mouse) protein is Alpha-defensin 22 (Defa22).